The primary structure comprises 657 residues: Probable potassium transport system protein Kup 1 (657 aa).

The next 12 helical transmembrane spans lie at 40–60 (VTSG…GDIG), 88–108 (VLSL…VLLL), 135–155 (WFLL…SMIT), 172–192 (PALE…LFAV), 198–218 (ALVA…IAVM), 241–261 (FLLS…LAVT), 282–302 (WMFF…ALVL), 320–340 (LVLP…QAVI), 380–400 (LLLI…NLAS), 402–422 (YGIA…VVIW), 432–452 (AAAV…ANLL), and 454–474 (LLEG…TIWT).

Belongs to the HAK/KUP transporter (TC 2.A.72) family.

It localises to the cell inner membrane. It carries out the reaction K(+)(in) + H(+)(in) = K(+)(out) + H(+)(out). Its function is as follows. Transport of potassium into the cell. Likely operates as a K(+):H(+) symporter. The polypeptide is Probable potassium transport system protein Kup 1 (Bradyrhizobium diazoefficiens (strain JCM 10833 / BCRC 13528 / IAM 13628 / NBRC 14792 / USDA 110)).